A 525-amino-acid chain; its full sequence is GMP synthase [glutamine-hydrolyzing] (525 aa).

Positions 9–202 (SILIIDFGSQ…VHKIVGLKSD (194 aa)) constitute a Glutamine amidotransferase type-1 domain. C86 acts as the Nucleophile in catalysis. Catalysis depends on residues H176 and E178. In terms of domain architecture, GMPS ATP-PPase spans 203 to 400 (WTMAAYRAEM…LGLPESFIGR (198 aa)). ATP is bound at residue 230 to 236 (SGGVDSS).

As to quaternary structure, homodimer.

It catalyses the reaction XMP + L-glutamine + ATP + H2O = GMP + L-glutamate + AMP + diphosphate + 2 H(+). The protein operates within purine metabolism; GMP biosynthesis; GMP from XMP (L-Gln route): step 1/1. In terms of biological role, catalyzes the synthesis of GMP from XMP. This Agrobacterium fabrum (strain C58 / ATCC 33970) (Agrobacterium tumefaciens (strain C58)) protein is GMP synthase [glutamine-hydrolyzing].